Here is a 1873-residue protein sequence, read N- to C-terminus: MEPSSPQDEGLRKKQPKKPVPEILPRPPRALFCLTLENPLRKACISIVEWKPFETIILLTIFANCVALAVYLPMPEDDNNSLNLGLEKLEYFFLIVFSIEAAMKIIAYGFLFHQDAYLRSGWNVLDFTIVFLGVFTVILEQVNVIQSHTAPMSSKGAGLDVKALRAFRVLRPLRLVSGVPSLQVVLNSIFKAMLPLFHIALLVLFMVIIYAIIGLELFKGKMHKTCYFIGTDIVATVENEEPSPCARTGSGRRCTINGSECRGGWPGPNHGITHFDNFGFSMLTVYQCITMEGWTDVLYWVNDAIGNEWPWIYFVTLILLGSFFILNLVLGVLSGEFTKEREKAKSRGTFQKLREKQQLDEDLRGYMSWITQGEVMDVEDFREGKLSLDEGGSDTESLYEIAGLNKIIQFIRHWRQWNRIFRWKCHDIVKSKVFYWLVILIVALNTLSIASEHHNQPLWLTRLQDIANRVLLSLFTTEMLMKMYGLGLRQYFMSIFNRFDCFVVCSGILEILLVESGAMTPLGISVLRCIRLLRIFKITKYWTSLSNLVASLLNSIRSIASLLLLLFLFIVIFALLGMQLFGGRYDFEDTEVRRSNFDNFPQALISVFQVLTGEDWTSMMYNGIMAYGGPSYPGMLVCIYFIILFVCGNYILLNVFLAIAVDNLAEAESLTSAQKAKAEEKKRRKMSKGLPDKSEEEKSTMAKKLEQKPKGEGIPTTAKLKIDEFESNVNEVKDPYPSADFPGDDEEDEPEIPLSPRPRPLAELQLKEKAVPIPEASSFFIFSPTNKIRVLCHRIVNATWFTNFILLFILLSSAALAAEDPIRADSMRNQILKHFDIGFTSVFTVEIVLKMTTYGAFLHKGSFCRNYFNMLDLLVVAVSLISMGLESSAISVVKILRVLRVLRPLRAINRAKGLKHVVQCMFVAISTIGNIVLVTTLLQFMFACIGVQLFKGKFFRCTDLSKMTEEECRGYYYVYKDGDPMQIELRHREWVHSDFHFDNVLSAMMSLFTVSTFEGWPQLLYKAIDSNAEDVGPIYNNRVEMAIFFIIYIILIAFFMMNIFVGFVIVTFQEQGETEYKNCELDKNQRQCVQYALKARPLRCYIPKNPYQYQVWYIVTSSYFEYLMFALIMLNTICLGMQHYNQSEQMNHISDILNVAFTIIFTLEMILKLMAFKARGYFGDPWNVFDFLIVIGSIIDVILSEIDTFLASSGGLYCLGGGCGNVDPDESARISSAFFRLFRVMRLIKLLSRAEGVRTLLWTFIKSFQALPYVALLIVMLFFIYAVIGMQMFGKIALVDGTQINRNNNFQTFPQAVLLLFRCATGEAWQEILLACSYGKLCDPESDYAPGEEYTCGTNFAYYYFISFYMLCAFLVINLFVAVIMDNFDYLTRDWSILGPHHLDEFKAIWAEYDPEAKGRIKHLDVVTLLRRIQPPLGFGKFCPHRVACKRLVGMNMPLNSDGTVTFNATLFALVRTALKIKTEGNFEQANEELRAIIKKIWKRTSMKLLDQVIPPIGDDEVTVGKFYATFLIQEHFRKFMKRQEEYYGYRPKKDIVQIQAGLRTIEEEAAPEICRTVSGDLAAEEELERAMVEAAMEEGIFRRTGGLFGQVDNFLERTNSLPPVMANQRPLQFAEIEMEEMESPVFLEDFPQDPRTNPLARANTNNANANVAYGNSNHSNSHVFSSVHYEREFPEETETPATRGRALGQPCRVLGPHSKPCVEMLKGLLTQRAMPRGQAPPAPCQCPRVESSMPEDRKSSTPGSLHEETPHSRSTRENTSRCSAPATALLIQKALVRGGLGTLAADANFIMATGQALADACQMEPEEVEIMATELLKGREAPEGMASSLGCLNLGSSLGSLDQHQGSQETLIPPRL.

Residues 1–23 (MEPSSPQDEGLRKKQPKKPVPEI) are disordered. The Cytoplasmic segment spans residues 1-51 (MEPSSPQDEGLRKKQPKKPVPEILPRPPRALFCLTLENPLRKACISIVEWK). One copy of the I repeat lies at 38–337 (NPLRKACISI…LVLGVLSGEF (300 aa)). Residues 52 to 70 (PFETIILLTIFANCVALAV) form a helical membrane-spanning segment. Topologically, residues 71 to 85 (YLPMPEDDNNSLNLG) are extracellular. Asn-79 carries an N-linked (GlcNAc...) asparagine glycan. A helical transmembrane segment spans residues 86–106 (LEKLEYFFLIVFSIEAAMKII). Topologically, residues 107 to 115 (AYGFLFHQD) are cytoplasmic. A helical membrane pass occupies residues 116 to 136 (AYLRSGWNVLDFTIVFLGVFT). Over 137 to 160 (VILEQVNVIQSHTAPMSSKGAGLD) the chain is Extracellular. A helical transmembrane segment spans residues 161–179 (VKALRAFRVLRPLRLVSGV). Over 180–196 (PSLQVVLNSIFKAMLPL) the chain is Cytoplasmic. Residues 197-218 (FHIALLVLFMVIIYAIIGLELF) traverse the membrane as a helical segment. Over 219–279 (KGKMHKTCYF…HGITHFDNFG (61 aa)) the chain is Extracellular. 2 disulfides stabilise this stretch: Cys-226-Cys-254 and Cys-245-Cys-261. The N-linked (GlcNAc...) asparagine glycan is linked to Asn-257. Residues 280–301 (FSMLTVYQCITMEGWTDVLYWV) constitute an intramembrane region (pore-forming). A Selectivity filter of repeat I motif is present at residues 290–293 (TMEG). Glu-292 contributes to the Ca(2+) binding site. The Extracellular portion of the chain corresponds to 302–309 (NDAIGNEW). A helical membrane pass occupies residues 310–330 (PWIYFVTLILLGSFFILNLVL). Topologically, residues 331–432 (GVLSGEFTKE…WKCHDIVKSK (102 aa)) are cytoplasmic. The interval 357-374 (QQLDEDLRGYMSWITQGE) is binding to the beta subunit. Residues Ser-393 and Ser-397 each carry the phosphoserine modification. The stretch at 418 to 664 (NRIFRWKCHD…VFLAIAVDNL (247 aa)) is one II repeat. A helical transmembrane segment spans residues 433–451 (VFYWLVILIVALNTLSIAS). The Extracellular segment spans residues 452–462 (EHHNQPLWLTR). Residues 463-483 (LQDIANRVLLSLFTTEMLMKM) form a helical membrane-spanning segment. Residues 484–494 (YGLGLRQYFMS) lie on the Cytoplasmic side of the membrane. A helical transmembrane segment spans residues 495–514 (IFNRFDCFVVCSGILEILLV). Residues 515-523 (ESGAMTPLG) lie on the Extracellular side of the membrane. Residues 524–542 (ISVLRCIRLLRIFKITKYW) form a helical membrane-spanning segment. The Cytoplasmic portion of the chain corresponds to 543 to 561 (TSLSNLVASLLNSIRSIAS). A helical transmembrane segment spans residues 562-581 (LLLLLFLFIVIFALLGMQLF). Topologically, residues 582-601 (GGRYDFEDTEVRRSNFDNFP) are extracellular. Residues 602-623 (QALISVFQVLTGEDWTSMMYNG) constitute an intramembrane region (pore-forming). The Selectivity filter of repeat II signature appears at 612–615 (TGED). Residue Glu-614 coordinates Ca(2+). Residues 624–633 (IMAYGGPSYP) lie on the Extracellular side of the membrane. Residues 634–653 (GMLVCIYFIILFVCGNYILL) form a helical membrane-spanning segment. The Cytoplasmic portion of the chain corresponds to 654–799 (NVFLAIAVDN…VLCHRIVNAT (146 aa)). Disordered stretches follow at residues 675–717 (KAKA…IPTT) and 731–757 (EVKD…LSPR). Ser-687 carries the phosphoserine; by PKA modification. Residues 690–711 (LPDKSEEEKSTMAKKLEQKPKG) are compositionally biased toward basic and acidic residues. Residues 742–751 (PGDDEEDEPE) are compositionally biased toward acidic residues. Residues 747 to 760 (EDEPEIPLSPRPRP) form an interaction with STAC, STAC2 and STAC3 (via SH3 domains) region. An III repeat occupies 786–1068 (NKIRVLCHRI…IFVGFVIVTF (283 aa)). The chain crosses the membrane as a helical span at residues 800 to 818 (WFTNFILLFILLSSAALAA). At 819–830 (EDPIRADSMRNQ) the chain is on the extracellular side. A helical membrane pass occupies residues 831–850 (ILKHFDIGFTSVFTVEIVLK). Residues 851-866 (MTTYGAFLHKGSFCRN) are Cytoplasmic-facing. A helical transmembrane segment spans residues 867-885 (YFNMLDLLVVAVSLISMGL). Residues 886–892 (ESSAISV) are Extracellular-facing. A helical membrane pass occupies residues 893–911 (VKILRVLRVLRPLRAINRA). At 912–930 (KGLKHVVQCMFVAISTIGN) the chain is on the cytoplasmic side. Residues 931–950 (IVLVTTLLQFMFACIGVQLF) form a helical membrane-spanning segment. Residues 951–1000 (KGKFFRCTDLSKMTEEECRGYYYVYKDGDPMQIELRHREWVHSDFHFDNV) lie on the Extracellular side of the membrane. Cys-957 and Cys-968 are joined by a disulfide. A dihydropyridine binding region spans residues 988–1077 (REWVHSDFHF…FQEQGETEYK (90 aa)). An intramembrane region (pore-forming) is located at residues 1001 to 1021 (LSAMMSLFTVSTFEGWPQLLY). Positions 1012–1015 (TFEG) match the Selectivity filter of repeat III motif. Position 1014 (Glu-1014) interacts with Ca(2+). At 1022-1038 (KAIDSNAEDVGPIYNNR) the chain is on the extracellular side. A helical membrane pass occupies residues 1039–1060 (VEMAIFFIIYIILIAFFMMNIF). Over 1061-1118 (VGFVIVTFQEQGETEYKNCELDKNQRQCVQYALKARPLRCYIPKNPYQYQVWYIVTSS) the chain is Cytoplasmic. The stretch at 1105-1384 (NPYQYQVWYI…LFVAVIMDNF (280 aa)) is one IV repeat. A helical membrane pass occupies residues 1119–1140 (YFEYLMFALIMLNTICLGMQHY). Asn-1141 carries an N-linked (GlcNAc...) asparagine glycan. Residues 1141-1148 (NQSEQMNH) are Extracellular-facing. A helical transmembrane segment spans residues 1149–1170 (ISDILNVAFTIIFTLEMILKLM). Over 1171 to 1180 (AFKARGYFGD) the chain is Cytoplasmic. A helical membrane pass occupies residues 1181–1200 (PWNVFDFLIVIGSIIDVILS). At 1201-1231 (EIDTFLASSGGLYCLGGGCGNVDPDESARIS) the chain is on the extracellular side. Residues 1232-1250 (SAFFRLFRVMRLIKLLSRA) form a helical membrane-spanning segment. Residues 1251–1268 (EGVRTLLWTFIKSFQALP) are Cytoplasmic-facing. The chain crosses the membrane as a helical span at residues 1269-1289 (YVALLIVMLFFIYAVIGMQMF). The Extracellular segment spans residues 1290–1311 (GKIALVDGTQINRNNNFQTFPQ). The segment at residues 1312-1330 (AVLLLFRCATGEAWQEILL) is an intramembrane region (pore-forming). The Selectivity filter of repeat IV signature appears at 1321-1324 (TGEA). At 1331 to 1356 (ACSYGKLCDPESDYAPGEEYTCGTNF) the chain is on the extracellular side. The tract at residues 1337–1403 (LCDPESDYAP…LGPHHLDEFK (67 aa)) is dihydropyridine binding. An intrachain disulfide couples Cys-1338 to Cys-1352. The interval 1349–1391 (EYTCGTNFAYYYFISFYMLCAFLVINLFVAVIMDNFDYLTRDW) is phenylalkylamine binding. The helical transmembrane segment at 1357–1381 (AYYYFISFYMLCAFLVINLFVAVIM) threads the bilayer. Topologically, residues 1382–1873 (DNFDYLTRDW…SQETLIPPRL (492 aa)) are cytoplasmic. The tract at residues 1522 to 1542 (KFYATFLIQEHFRKFMKRQEE) is interaction with calmodulin. Ser-1575 bears the Phosphoserine; by PKA and CAMK2 mark. Ser-1617 carries the post-translational modification Phosphoserine; by PKA. The disordered stretch occupies residues 1731–1780 (MPRGQAPPAPCQCPRVESSMPEDRKSSTPGSLHEETPHSRSTRENTSRCS). Residues 1751 to 1776 (PEDRKSSTPGSLHEETPHSRSTRENT) are compositionally biased toward basic and acidic residues.

This sequence belongs to the calcium channel alpha-1 subunit (TC 1.A.1.11) family. CACNA1S subfamily. As to quaternary structure, component of a calcium channel complex consisting of a pore-forming alpha subunit (CACNA1S) and the ancillary subunits CACNB1 or CACNB2, CACNG1 and CACNA2D1. The channel complex contains alpha, beta, gamma and delta subunits in a 1:1:1:1 ratio, i.e. it contains either CACNB1 or CACNB2. CACNA1S channel activity is modulated by the auxiliary subunits (CACNB1 or CACNB2, CACNG1 and CACNA2D1). Interacts with DYSF and JSRP1. Interacts with RYR1. Interacts with STAC, STAC2 and STAC3 (via their SH3 domains). Interacts with CALM. The alpha-1S subunit is found in two isoforms in the skeletal muscle: a minor form of 212 kDa containing the complete amino acid sequence, and a major form of 190 kDa derived from the full-length form by post-translational proteolysis close to Phe-1690. In terms of processing, phosphorylated. Phosphorylation by PKA activates the calcium channel. Both the minor and major forms are phosphorylated in vitro by PKA. Phosphorylation at Ser-1575 is involved in beta-adrenergic-mediated regulation of the channel. As to expression, skeletal muscle specific.

Its subcellular location is the cell membrane. The protein localises to the sarcolemma. It localises to the T-tubule. It catalyses the reaction Ca(2+)(in) = Ca(2+)(out). Its activity is regulated as follows. Channel activity is blocked by dihydropyridines (DHP), phenylalkylamines, and by benzothiazepines. In terms of biological role, pore-forming, alpha-1S subunit of the voltage-gated calcium channel that gives rise to L-type calcium currents in skeletal muscle. Calcium channels containing the alpha-1S subunit play an important role in excitation-contraction coupling in skeletal muscle via their interaction with RYR1, which triggers Ca(2+) release from the sarcoplasmic reticulum and ultimately results in muscle contraction. Long-lasting (L-type) calcium channels belong to the 'high-voltage activated' (HVA) group. This is Voltage-dependent L-type calcium channel subunit alpha-1S (CACNA1S) from Homo sapiens (Human).